Reading from the N-terminus, the 448-residue chain is CCA-adding enzyme (448 aa).

S52 and K55 together coordinate ATP. 2 residues coordinate CTP: S52 and K55. Positions 64, 66, and 118 each coordinate Mg(2+). ATP is bound by residues H141, K160, and Y169. CTP contacts are provided by H141, K160, and Y169.

It belongs to the tRNA nucleotidyltransferase/poly(A) polymerase family. Archaeal CCA-adding enzyme subfamily. As to quaternary structure, homodimer. Mg(2+) is required as a cofactor.

It carries out the reaction a tRNA precursor + 2 CTP + ATP = a tRNA with a 3' CCA end + 3 diphosphate. The catalysed reaction is a tRNA with a 3' CCA end + 2 CTP + ATP = a tRNA with a 3' CCACCA end + 3 diphosphate. Functionally, catalyzes the addition and repair of the essential 3'-terminal CCA sequence in tRNAs without using a nucleic acid template. Adds these three nucleotides in the order of C, C, and A to the tRNA nucleotide-73, using CTP and ATP as substrates and producing inorganic pyrophosphate. tRNA 3'-terminal CCA addition is required both for tRNA processing and repair. Also involved in tRNA surveillance by mediating tandem CCA addition to generate a CCACCA at the 3' terminus of unstable tRNAs. While stable tRNAs receive only 3'-terminal CCA, unstable tRNAs are marked with CCACCA and rapidly degraded. The chain is CCA-adding enzyme from Pyrococcus abyssi (strain GE5 / Orsay).